Reading from the N-terminus, the 118-residue chain is MQPYKRAQRLKVLLKEEVAEIILHKIKDPRLGFITVTDVELSDDLRIAKVFISVLKTEDRQLTLQILNDAKGFVRSEIAKRLRIKIIPTFEFLFDESIDRGFRIDQLLKEIKKTSEEV.

This sequence belongs to the RbfA family. Monomer. Binds 30S ribosomal subunits, but not 50S ribosomal subunits or 70S ribosomes.

The protein resides in the cytoplasm. One of several proteins that assist in the late maturation steps of the functional core of the 30S ribosomal subunit. Associates with free 30S ribosomal subunits (but not with 30S subunits that are part of 70S ribosomes or polysomes). Required for efficient processing of 16S rRNA. May interact with the 5'-terminal helix region of 16S rRNA. This chain is Ribosome-binding factor A, found in Thermodesulfovibrio yellowstonii (strain ATCC 51303 / DSM 11347 / YP87).